Consider the following 791-residue polypeptide: GDH/6PGL endoplasmic bifunctional protein (791 aa).

Residues 1-19 (MWNMLIVAMCLALLGCLQA) form the signal peptide. Gln20 is subject to Pyrrolidone carboxylic acid. A hexose-6-phosphate dehydrogenase region spans residues 20 to 526 (QELQGHVSII…SGRLFFSQQQ (507 aa)). Residues 32–39 (GATGDLAK) and Tyr149 each bind NADP(+). N-linked (GlcNAc...) asparagine glycosylation occurs at Asn157. Lys174 is an NADP(+) binding site. D-glucose 6-phosphate contacts are provided by residues Lys174, 204–208 (HYLGK), Glu243, and Asp262. At Lys208 the chain carries N6-succinyllysine. Catalysis depends on His267, which acts as the Proton acceptor. Residue Asn282 is glycosylated (N-linked (GlcNAc...) asparagine). Lys360 and Arg365 together coordinate D-glucose 6-phosphate. Arg370 contacts NADP(+). A linker region spans residues 527–540 (PEQLVPGPGPAPMP). The tract at residues 541–791 (SDFQVLRAKY…WYMDYDAFLG (251 aa)) is 6-phosphogluconolactonase. NADP(+) is bound at residue Trp617. An N-linked (GlcNAc...) asparagine glycan is attached at Asn683.

The protein in the N-terminal section; belongs to the glucose-6-phosphate dehydrogenase family. This sequence in the C-terminal section; belongs to the glucosamine/galactosamine-6-phosphate isomerase family. 6-phosphogluconolactonase subfamily. In terms of assembly, homodimer. As to expression, present in most tissues examined, strongest in liver.

It localises to the endoplasmic reticulum lumen. The enzyme catalyses D-glucose 6-phosphate + NADP(+) = 6-phospho-D-glucono-1,5-lactone + NADPH + H(+). The catalysed reaction is D-glucose 6-phosphate + NAD(+) = 6-phospho-D-glucono-1,5-lactone + NADH + H(+). It carries out the reaction 6-phospho-D-glucono-1,5-lactone + H2O = 6-phospho-D-gluconate + H(+). It catalyses the reaction 2-deoxy-D-glucose 6-phosphate + NAD(+) = 2-deoxy-6-phospho-D-glucono-1,5-lactone + NADH + H(+). The enzyme catalyses 2-deoxy-D-glucose 6-phosphate + NADP(+) = 2-deoxy-6-phospho-D-glucono-1,5-lactone + NADPH + H(+). The catalysed reaction is D-galactose 6-phosphate + NADP(+) = 6-phospho-D-galactono-1,5-lactone + NADPH + H(+). It carries out the reaction D-galactose 6-phosphate + NAD(+) = 6-phospho-D-galactono-1,5-lactone + NADH + H(+). It catalyses the reaction D-glucosamine 6-phosphate + NADP(+) = 2-amino-2-deoxy-6-phospho-D-glucono-1,5-lactone + NADPH + 2 H(+). The enzyme catalyses D-glucose + NAD(+) = D-glucono-1,5-lactone + NADH + H(+). The catalysed reaction is D-glucose + NADP(+) = D-glucono-1,5-lactone + NADPH + H(+). It carries out the reaction D-glucose 6-sulfate + NADP(+) = 6-sulfo-D-glucono-1,5-lactone + NADPH + H(+). The protein operates within carbohydrate degradation; pentose phosphate pathway; D-ribulose 5-phosphate from D-glucose 6-phosphate (oxidative stage): step 1/3. Its pathway is carbohydrate degradation; pentose phosphate pathway; D-ribulose 5-phosphate from D-glucose 6-phosphate (oxidative stage): step 2/3. It participates in carbohydrate degradation; pentose phosphate pathway; D-ribulose 5-phosphate from D-glucose 6-phosphate (oxidative stage). Functionally, bifunctional enzyme localized in the lumen of the endoplasmic reticulum that catalyzes the first two steps of the oxidative branch of the pentose phosphate pathway/shunt, an alternative to glycolysis and a major source of reducing power and metabolic intermediates for biosynthetic processes. Has a hexose-6-phosphate dehydrogenase activity, with broad substrate specificity compared to glucose-6-phosphate 1-dehydrogenase/G6PD, and catalyzes the first step of the pentose phosphate pathway. In addition, acts as a 6-phosphogluconolactonase and catalyzes the second step of the pentose phosphate pathway. May have a dehydrogenase activity for alternative substrates including glucosamine 6-phosphate and glucose 6-sulfate. The main function of this enzyme is to provide reducing equivalents such as NADPH to maintain the adequate levels of reductive cofactors in the oxidizing environment of the endoplasmic reticulum. By producing NADPH that is needed by reductases of the lumen of the endoplasmic reticulum like corticosteroid 11-beta-dehydrogenase isozyme 1/HSD11B1, indirectly regulates their activity. The polypeptide is GDH/6PGL endoplasmic bifunctional protein (Homo sapiens (Human)).